Reading from the N-terminus, the 1154-residue chain is Voltage-dependent calcium channel subunit alpha-2/delta-2 (1154 aa).

The signal sequence occupies residues 1–18; it reads MAVPARTCGASWPGPVRT. The tract at residues 1 to 37 is disordered; the sequence is MAVPARTCGASWPGPVRTARPWPGRGPRPCPDPRGPA. Residues 19 to 1116 are Extracellular-facing; sequence ARPWPGRGPR…TEDTSDCGRG (1098 aa). The span at 24-34 shows a compositional bias: pro residues; it reads GRGPRPCPDPR. Asn205 is a glycosylation site (N-linked (GlcNAc...) asparagine). In terms of domain architecture, VWFA spans 294–472; it reads DMVIIVDVSG…INTQEYLDVL (179 aa). Residues Asp300, Ser302, and Ser304 each coordinate a divalent metal cation. An MIDAS-like motif motif is present at residues 300–304; the sequence is DVSGS. 6 N-linked (GlcNAc...) asparagine glycosylation sites follow: Asn389, Asn421, Asn510, Asn543, Asn627, and Asn864. An intrachain disulfide couples Cys446 to Cys1101. Residues 488–577 enclose the Cache domain; that stretch reads WTNVYEDALG…KPQTTNFREP (90 aa). The helical transmembrane segment at 1117–1137 threads the bilayer; it reads ASFPPSLGVLVSLQLLLLLGL. The Cytoplasmic segment spans residues 1138 to 1154; it reads PPRPQPQVHSFAASRHL.

The protein belongs to the calcium channel subunit alpha-2/delta family. As to quaternary structure, dimer formed of alpha-2-2 and delta-2 chains; disulfide-linked. Voltage-dependent calcium channels are multisubunit complexes, consisting of alpha-1 (CACNA1), alpha-2 (CACNA2D), beta (CACNB) and delta (CACNA2D) subunits in a 1:1:1:1 ratio. N-glycosylated. Post-translationally, may be proteolytically processed into subunits alpha-2-2 and delta-2 that are disulfide-linked. It is however unclear whether such cleavage really takes place in vivo and has a functional role. According to PubMed:11306709, it is processed, at least in vitro, while according to PubMed:17052222, it is only poorly processed in vivo. In terms of tissue distribution, predominantly expressed in brain in a restricted pattern. Also expressed at lower level in kidney and testis Not expressed in lung at any moment of development. In brain, it localizes to sections of P21 brain. Expressed at high level in the cerebellum, with moderate levels in medulla, pons, and striatum. Also expressed in cortex, hippocampus, habenula and nucleus reticularis thalami (nRT). Strongly expressed in cerebellar Purkinje cells.

Its subcellular location is the membrane. In terms of biological role, the alpha-2/delta subunit of voltage-dependent calcium channels regulates calcium current density and activation/inactivation kinetics of the calcium channel. Acts as a regulatory subunit for P/Q-type calcium channel (CACNA1A), N-type (CACNA1B), L-type (CACNA1C OR CACNA1D) and possibly T-type (CACNA1G). This chain is Voltage-dependent calcium channel subunit alpha-2/delta-2 (Cacna2d2), found in Mus musculus (Mouse).